We begin with the raw amino-acid sequence, 380 residues long: GATOR1 complex protein NPRL2 (380 aa).

Residues 1–133 (MGSGCRIECI…SKQKLVPIMT (133 aa)) form an interaction with PDPK1 region. A GDP-binding site is contributed by R78. R78 is subject to Asymmetric dimethylarginine. Residues K158 and K357 each participate in a glycyl lysine isopeptide (Lys-Gly) (interchain with G-Cter in ubiquitin) cross-link.

This sequence belongs to the NPR2 family. In terms of assembly, within the GATOR complex, component of the GATOR1 subcomplex, made of DEPDC5, NPRL2 and NPRL3. GATOR1 mediates the strong interaction of the GATOR complex with small GTPases Rag (RagA/RRAGA, RagB/RRAGB, RagC/RRAGC and/or RagD/RRAGD) heterodimers. GATOR1 interacts with GPR155/LYCHOS; interaction takes place in presence of cholesterol and prevents interaction between GATOR1 and KICSTOR. Interacts with PDPK1. In the presence of abundant amino acids, ubiquitinated at Lys-158 and Lys-357 via 'Lys-6'-linked ubiquitination by the WDR24 component of the GATOR2 complex, thereby inhibiting the GATOR1 complex and promoting mTORC1 activation. In terms of processing, asymmetric dimethylation at Arg-78 by PRMT1 inhibits the GTPase activator activity of the GATOR1 complex and consequently inducing timely mTORC1 activation under methionine-sufficient conditions. In terms of tissue distribution, most abundant in skeletal muscle, followed by brain, liver and pancreas, with lower amounts in lung, kidney, placenta and heart. Expressed in the frontal lobe cortex as well as in the temporal, parietal, and occipital lobes. Expressed in most lung cancer cell lines tested.

The protein resides in the lysosome membrane. Its function is as follows. Catalytic component of the GATOR1 complex, a multiprotein complex that functions as an inhibitor of the amino acid-sensing branch of the mTORC1 pathway. In response to amino acid depletion, the GATOR1 complex has GTPase activating protein (GAP) activity and strongly increases GTP hydrolysis by RagA/RRAGA (or RagB/RRAGB) within heterodimeric Rag complexes, thereby turning them into their inactive GDP-bound form, releasing mTORC1 from lysosomal surface and inhibiting mTORC1 signaling. In the presence of abundant amino acids, the GATOR1 complex is ubiquitinated and inhibited by GATOR2. Within the GATOR1 complex, NPRL2 constitutes the catalytic subunit that mediates the GTPase activator activity and under methionine-sufficient conditions, the GTPase activator activity is inhibited by PRMT1 through methylation and consequently inducing timely mTORC1 activation. In terms of biological role, suppresses Src-dependent tyrosine phosphorylation and activation of PDPK1 and its downstream signaling. Down-regulates PDPK1 kinase activity by interfering with tyrosine phosphorylation at 'Tyr-9', 'Tyr-373' and 'Tyr-376' residues. May act as a tumor suppressor. Suppresses cell growth and enhances sensitivity to various anticancer drugs. The polypeptide is GATOR1 complex protein NPRL2 (Homo sapiens (Human)).